Consider the following 856-residue polypeptide: DNA mismatch repair protein MutS (856 aa).

609-616 (GPNMSGKS) provides a ligand contact to ATP.

It belongs to the DNA mismatch repair MutS family.

Its function is as follows. This protein is involved in the repair of mismatches in DNA. It is possible that it carries out the mismatch recognition step. This protein has a weak ATPase activity. The protein is DNA mismatch repair protein MutS of Finegoldia magna (strain ATCC 29328 / DSM 20472 / WAL 2508) (Peptostreptococcus magnus).